The following is a 205-amino-acid chain: Ephrin-A1 (205 aa).

The signal sequence occupies residues 1–18 (MEFFWASLLGLCCSLAAA). The 133-residue stretch at 19–151 (NRHTVFWNSS…RLKVMIAGKI (133 aa)) folds into the Ephrin RBD domain. The N-linked (GlcNAc...) asparagine glycan is linked to Asn26. 2 disulfide bridges follow: Cys51–Cys92 and Cys80–Cys140. Ser182 carries the GPI-anchor amidated serine lipid modification. Residues 183–205 (AAPRLFPLAWAVLLLPFLLLQIP) constitute a propeptide, removed in mature form.

Belongs to the ephrin family. As to quaternary structure, monomer. Homodimer. Forms heterodimers with EPHA2. Binds to the receptor tyrosine kinases EPHA2, EPHA3, EPHA4, EPHA5, EPHA6 and EPHA7. Also binds with low affinity to EPHA1. In terms of processing, undergoes proteolysis by a metalloprotease to give rise to a soluble monomeric form. Post-translationally, N-Glycosylation is required for binding to EPHA2 receptor and inducing its internalization.

Its subcellular location is the cell membrane. The protein resides in the secreted. Its function is as follows. Cell surface GPI-bound ligand for Eph receptors, a family of receptor tyrosine kinases which are crucial for migration, repulsion and adhesion during neuronal, vascular and epithelial development. Binds promiscuously Eph receptors residing on adjacent cells, leading to contact-dependent bidirectional signaling into neighboring cells. Plays an important role in angiogenesis and tumor neovascularization. The recruitment of VAV2, VAV3 and PI3-kinase p85 subunit by phosphorylated EPHA2 is critical for EFNA1-induced RAC1 GTPase activation and vascular endothelial cell migration and assembly. Exerts anti-oncogenic effects in tumor cells through activation and down-regulation of EPHA2. Activates EPHA2 by inducing tyrosine phosphorylation which leads to its internalization and degradation. Acts as a negative regulator in the tumorigenesis of gliomas by down-regulating EPHA2 and FAK. Can evoke collapse of embryonic neuronal growth cone and regulates dendritic spine morphogenesis. The protein is Ephrin-A1 (EFNA1) of Bos taurus (Bovine).